Here is a 26-residue protein sequence, read N- to C-terminus: GLIGSIGKALGGLLVDVLKPKLQAAS.

Expressed by the dorsal and submental skin glands.

It localises to the secreted. This chain is Citropin-2.1.3, found in Ranoidea citropa (Australian Blue Mountains tree frog).